Here is a 364-residue protein sequence, read N- to C-terminus: Probable dual-specificity RNA methyltransferase RlmN (364 aa).

Glutamate 107 (proton acceptor) is an active-site residue. One can recognise a Radical SAM core domain in the interval 113–346; it reads HEYGNSVCVT…ATIRREQGSD (234 aa). Residues cysteine 120 and cysteine 351 are joined by a disulfide bond. Cysteine 127, cysteine 131, and cysteine 134 together coordinate [4Fe-4S] cluster. S-adenosyl-L-methionine contacts are provided by residues 177–178, serine 209, 232–234, and asparagine 308; these read GE and SLH. Cysteine 351 (S-methylcysteine intermediate) is an active-site residue.

The protein belongs to the radical SAM superfamily. RlmN family. Requires [4Fe-4S] cluster as cofactor.

Its subcellular location is the cytoplasm. It carries out the reaction adenosine(2503) in 23S rRNA + 2 reduced [2Fe-2S]-[ferredoxin] + 2 S-adenosyl-L-methionine = 2-methyladenosine(2503) in 23S rRNA + 5'-deoxyadenosine + L-methionine + 2 oxidized [2Fe-2S]-[ferredoxin] + S-adenosyl-L-homocysteine. It catalyses the reaction adenosine(37) in tRNA + 2 reduced [2Fe-2S]-[ferredoxin] + 2 S-adenosyl-L-methionine = 2-methyladenosine(37) in tRNA + 5'-deoxyadenosine + L-methionine + 2 oxidized [2Fe-2S]-[ferredoxin] + S-adenosyl-L-homocysteine. Specifically methylates position 2 of adenine 2503 in 23S rRNA and position 2 of adenine 37 in tRNAs. Confers resistance to some classes of antibiotics. The sequence is that of Probable dual-specificity RNA methyltransferase RlmN from Staphylococcus carnosus (strain TM300).